A 592-amino-acid chain; its full sequence is Guanylate-binding protein 1 (592 aa).

The tract at residues 1–311 is GTPase domain (Globular); sequence MASEIHMTGP…NAISSGDLPC (311 aa). The 244-residue stretch at 35–278 folds into the GB1/RHD3-type G domain; it reads TQPMVVVAIV…FCSYIFSNSK (244 aa). Residues 45 to 52, 67 to 69, and 97 to 101 contribute to the GTP site; these read GLYRTGKS, LGS, and DTEGL. Serine 156 carries the post-translational modification Phosphoserine. Cysteine 589 carries the cysteine methyl ester modification. The S-farnesyl cysteine moiety is linked to residue cysteine 589. At threonine 590 the chain carries Phosphothreonine. Residues 590 to 592 constitute a propeptide, removed in mature form; that stretch reads TIS.

It belongs to the TRAFAC class dynamin-like GTPase superfamily. GB1/RHD3 GTPase family. GB1 subfamily. Homodimer; homodimerization occurs upon GTP-binding and is required for the second hydrolysis step from GDP to GMP. Undergoes conformational changes and oligomerization upon GTP-binding and hydrolysis. Heterodimer with other family members, including GBP2, GBP3, GBP4 and GBP5. Dimerization regulates subcellular location to membranous structures. Interacts with SQSTM1. Interacts (when phosphorylated) with 14-3-3 protein sigma (SFN); leading to GBP1 retention in the cytosol and inactivation. In terms of processing, isoprenylation is required for proper subcellular location. Phosphorylated at Ser-156 by PIM1 in absence of infection, inhibits GBP1: phosphorylation promotes interaction with 14-3-3 protein sigma (SFN), leading to GBP1 retention in the cytosol. Dephosphorylated in response to infection, liberating GBP1.

Its subcellular location is the cytoplasmic vesicle membrane. It localises to the golgi apparatus membrane. It is found in the cell membrane. The protein localises to the cytoplasm. The protein resides in the cytosol. Its subcellular location is the secreted. The enzyme catalyses GTP + H2O = GDP + phosphate + H(+). It carries out the reaction GDP + H2O = GMP + phosphate + H(+). In terms of biological role, interferon (IFN)-inducible GTPase that plays important roles in innate immunity against a diverse range of bacterial, viral and protozoan pathogens. Hydrolyzes GTP to GMP in two consecutive cleavage reactions: GTP is first hydrolyzed to GDP and then to GMP in a processive manner. Following infection, recruited to the pathogen-containing vacuoles or vacuole-escaped bacteria and promotes both inflammasome assembly and autophagy. Acts as a positive regulator of inflammasome assembly by facilitating the detection of inflammasome ligands from pathogens. Involved in the lysis of pathogen-containing vacuoles, releasing pathogens into the cytosol. Following pathogen release in the cytosol, forms a protein coat in a GTPase-dependent manner that encapsulates pathogens and promotes the detection of ligands by pattern recognition receptors. Plays a key role in inflammasome assembly in response to infection by Gram-negative bacteria: following pathogen release in the cytosol, forms a protein coat that encapsulates Gram-negative bacteria and directly binds to lipopolysaccharide (LPS), disrupting the O-antigen barrier and unmasking lipid A that is that detected by the non-canonical inflammasome effector CASP4/CASP11. Also promotes recruitment of proteins that mediate bacterial cytolysis, leading to release double-stranded DNA (dsDNA) that activates the AIM2 inflammasome. Involved in autophagy by regulating bacteriolytic peptide generation via its interaction with ubiquitin-binding protein SQSTM1, which delivers monoubiquitinated proteins to autolysosomes for the generation of bacteriolytic peptides. Confers protection to several pathogens, including the bacterial pathogens L.monocytogenes and M.bovis BCG as well as the protozoan pathogen T.gondii. Exhibits antiviral activity against influenza virus. In Pongo abelii (Sumatran orangutan), this protein is Guanylate-binding protein 1 (GBP1).